Reading from the N-terminus, the 852-residue chain is Leucine--tRNA ligase (852 aa).

The 'HIGH' region signature appears at P42 to H52. Residues N586–E606 form a disordered region. A 'KMSKS' region motif is present at residues K614–S618. K617 contributes to the ATP binding site.

Belongs to the class-I aminoacyl-tRNA synthetase family.

The protein resides in the cytoplasm. It carries out the reaction tRNA(Leu) + L-leucine + ATP = L-leucyl-tRNA(Leu) + AMP + diphosphate. In Picosynechococcus sp. (strain ATCC 27264 / PCC 7002 / PR-6) (Agmenellum quadruplicatum), this protein is Leucine--tRNA ligase.